A 250-amino-acid polypeptide reads, in one-letter code: Proteasome subunit alpha (250 aa).

Belongs to the peptidase T1A family. The 20S proteasome core is composed of 14 alpha and 14 beta subunits that assemble into four stacked heptameric rings, resulting in a barrel-shaped structure. The two inner rings, each composed of seven catalytic beta subunits, are sandwiched by two outer rings, each composed of seven alpha subunits. The catalytic chamber with the active sites is on the inside of the barrel. Has a gated structure, the ends of the cylinder being occluded by the N-termini of the alpha-subunits. Is capped at one or both ends by the proteasome regulatory ATPase, PAN.

The protein resides in the cytoplasm. The formation of the proteasomal ATPase PAN-20S proteasome complex, via the docking of the C-termini of PAN into the intersubunit pockets in the alpha-rings, triggers opening of the gate for substrate entry. Interconversion between the open-gate and close-gate conformations leads to a dynamic regulation of the 20S proteasome proteolysis activity. Functionally, component of the proteasome core, a large protease complex with broad specificity involved in protein degradation. In Haloquadratum walsbyi (strain DSM 16790 / HBSQ001), this protein is Proteasome subunit alpha.